A 249-amino-acid chain; its full sequence is 2,3-bisphosphoglycerate-dependent phosphoglycerate mutase (249 aa).

Residues 8-15 (RHGESVWN), 21-22 (TG), R60, 87-90 (ERHY), K98, 114-115 (RR), and 183-184 (GN) contribute to the substrate site. The active-site Tele-phosphohistidine intermediate is H9. E87 serves as the catalytic Proton donor/acceptor.

The protein belongs to the phosphoglycerate mutase family. BPG-dependent PGAM subfamily.

The catalysed reaction is (2R)-2-phosphoglycerate = (2R)-3-phosphoglycerate. It participates in carbohydrate degradation; glycolysis; pyruvate from D-glyceraldehyde 3-phosphate: step 3/5. Catalyzes the interconversion of 2-phosphoglycerate and 3-phosphoglycerate. The polypeptide is 2,3-bisphosphoglycerate-dependent phosphoglycerate mutase (Endomicrobium trichonymphae).